A 286-amino-acid chain; its full sequence is Plasma membrane ascorbate-dependent reductase CYBRD1 (286 aa).

The Cytoplasmic portion of the chain corresponds to 1-7 (MAMEGYR). A helical membrane pass occupies residues 8 to 32 (GFLGLLVSALLVGFLSVIFVLIWVL). In terms of domain architecture, Cytochrome b561 spans 15–220 (SALLVGFLSV…FGALIFWIVT (206 aa)). The Extracellular portion of the chain corresponds to 33–47 (HFREGLGWDGGALEF). Residues 48 to 69 (NWHPVLAVTGFVFIQGIAIIVY) form a helical membrane-spanning segment. The heme b site is built by H50, R70, and K79. The Cytoplasmic portion of the chain corresponds to 70 to 78 (RLPWTWKCS). Positions 79 and 83 each coordinate L-ascorbate. The helical transmembrane segment at 79 to 105 (KFLMKSIHAGLNAVAAILAIISVVAVF) threads the bilayer. Residue H86 coordinates heme b. The Extracellular portion of the chain corresponds to 106–118 (DYHNVRKIPHMYS). H108 serves as a coordination point for Fe(3+). Heme b-binding positions include 115–118 (HMYS) and H120. A helical transmembrane segment spans residues 119–144 (LHSWVGLTVLILYIQQLVVGFFIFLL). Residues 145-151 (PWAPPSL) lie on the Cytoplasmic side of the membrane. R152 is an L-ascorbate binding site. Residues 152–179 (RAIVMPIHVYSGLLLFGTVIATVLMGVT) traverse the membrane as a helical segment. Positions 159 and 180 each coordinate heme b. Residues 180–197 (EKLFFVLKNPSYHSFPPE) lie on the Extracellular side of the membrane. A helical membrane pass occupies residues 198–222 (GVFTNTLGLLILVFGALIFWIVTRP). Topologically, residues 223–286 (QWKRPREPGS…LVDTGQRSTM (64 aa)) are cytoplasmic. K225 serves as a coordination point for heme b. At S232 the chain carries Phosphoserine. T285 carries the post-translational modification Phosphothreonine.

Homodimer. Requires heme b as cofactor. As to expression, highly expressed in all regions of the small intestine and colon studied in suckling animals. However, after weaning, when iron absorption declines significantly, strong expression is retained only in the duodenum. Also expressed in respiratory epithelium.

The protein localises to the cell membrane. The protein resides in the apical cell membrane. The catalysed reaction is Fe(3+)(out) + L-ascorbate(in) = monodehydro-L-ascorbate radical(in) + Fe(2+)(out) + H(+). It carries out the reaction Cu(2+)(out) + L-ascorbate(in) = Cu(+)(out) + monodehydro-L-ascorbate radical(in) + H(+). It catalyses the reaction monodehydro-L-ascorbate radical(out) + L-ascorbate(in) = monodehydro-L-ascorbate radical(in) + L-ascorbate(out). Functionally, plasma membrane reductase that uses cytoplasmic ascorbate as an electron donor to reduce extracellular Fe(3+) into Fe(2+). Probably functions in dietary iron absorption at the brush border of duodenal enterocytes by producing Fe(2+), the divalent form of iron that can be transported into enterocytes. It is also able to reduce extracellular monodehydro-L-ascorbate and may be involved in extracellular ascorbate regeneration by erythrocytes in blood. May also act as a ferrireductase in airway epithelial cells. May also function as a cupric transmembrane reductase. This is Plasma membrane ascorbate-dependent reductase CYBRD1 from Rattus norvegicus (Rat).